Consider the following 177-residue polypeptide: Protein C (177 aa).

A compositionally biased stretch (polar residues) spans 1 to 10; that stretch reads MSTKAWNASR. The disordered stretch occupies residues 1 to 38; that stretch reads MSTKAWNASRLSGPDPSTPWSLRKPLQHGSRPPKGKRL.

Belongs to the morbillivirus protein C family.

In Rinderpest virus (strain RBOK) (RDV), this protein is Protein C (P/V/C).